The chain runs to 206 residues: LexA repressor (206 aa).

The segment at residues 28–48 (RAEIATRLGFKSANAAEEHLK) is a DNA-binding region (H-T-H motif). Residues S123 and K160 each act as for autocatalytic cleavage activity in the active site.

Belongs to the peptidase S24 family. As to quaternary structure, homodimer.

The enzyme catalyses Hydrolysis of Ala-|-Gly bond in repressor LexA.. Its function is as follows. Represses a number of genes involved in the response to DNA damage (SOS response), including recA and lexA. In the presence of single-stranded DNA, RecA interacts with LexA causing an autocatalytic cleavage which disrupts the DNA-binding part of LexA, leading to derepression of the SOS regulon and eventually DNA repair. The polypeptide is LexA repressor (Shewanella baltica (strain OS223)).